The primary structure comprises 362 residues: 3-dehydroquinate synthase (362 aa).

NAD(+)-binding positions include 72–77 (DGEAHK), 106–110 (GVIGD), 130–131 (TT), K143, and K152. Residues E185, H248, and H265 each contribute to the Zn(2+) site.

Belongs to the sugar phosphate cyclases superfamily. Dehydroquinate synthase family. Requires Co(2+) as cofactor. It depends on Zn(2+) as a cofactor. NAD(+) is required as a cofactor.

It localises to the cytoplasm. The catalysed reaction is 7-phospho-2-dehydro-3-deoxy-D-arabino-heptonate = 3-dehydroquinate + phosphate. The protein operates within metabolic intermediate biosynthesis; chorismate biosynthesis; chorismate from D-erythrose 4-phosphate and phosphoenolpyruvate: step 2/7. In terms of biological role, catalyzes the conversion of 3-deoxy-D-arabino-heptulosonate 7-phosphate (DAHP) to dehydroquinate (DHQ). In Laribacter hongkongensis (strain HLHK9), this protein is 3-dehydroquinate synthase.